The primary structure comprises 341 residues: Methionine import ATP-binding protein MetN 1 (341 aa).

One can recognise an ABC transporter domain in the interval 2 to 241 (IEFRQVSKSF…PKTTIAQNFV (240 aa)). 38-45 (GYSGAGKS) provides a ligand contact to ATP.

It belongs to the ABC transporter superfamily. Methionine importer (TC 3.A.1.24) family. In terms of assembly, the complex is composed of two ATP-binding proteins (MetN), two transmembrane proteins (MetI) and a solute-binding protein (MetQ).

Its subcellular location is the cell membrane. The enzyme catalyses L-methionine(out) + ATP + H2O = L-methionine(in) + ADP + phosphate + H(+). It carries out the reaction D-methionine(out) + ATP + H2O = D-methionine(in) + ADP + phosphate + H(+). Functionally, part of the ABC transporter complex MetNIQ involved in methionine import. Responsible for energy coupling to the transport system. The chain is Methionine import ATP-binding protein MetN 1 from Staphylococcus aureus (strain MRSA252).